A 246-amino-acid polypeptide reads, in one-letter code: NLP effector protein 2 (246 aa).

Positions 1–19 (MKFVVFLCAIAAVVATIQG) are cleaved as a signal peptide. A Conserved undecapeptide motif I motif is present at residues 113-123 (AIMYSWYFPKD). A Hepta-peptide GHRHDWE motif II motif is present at residues 130–136 (GHRHDWE).

The protein belongs to the Necrosis inducing protein (NPP1) family.

The protein localises to the secreted. Functionally, secreted effector that contributes strongly to virulence during infection by P.capsici. Causes large necrotic areas in both host C.annuum and non-host N.benthamiana. This Phytophthora capsici protein is NLP effector protein 2.